A 364-amino-acid polypeptide reads, in one-letter code: Gap junction delta-4 protein (364 aa).

Topologically, residues 1–19 are cytoplasmic; it reads MEKLNLLGFLIITLNCNVT. The helical transmembrane segment at 20-40 threads the bilayer; the sequence is IMGMIWLIVEVLLRMLVVVLA. Residues 41 to 76 lie on the Extracellular side of the membrane; that stretch reads GSPIYEDEQERFICNTLQPGCANVCYDLFSPVSPLR. Residues 77–97 form a helical membrane-spanning segment; it reads FWLVQSLALLLPSVVFGTYTL. At 98–128 the chain is on the cytoplasmic side; the sequence is HRGAKLAAVGGACRPQVPDLSTAYLVHLLLR. Residues 129-149 traverse the membrane as a helical segment; that stretch reads MLLEAGLAFLHYFLFGFSVPA. Residues 150–173 are Extracellular-facing; the sequence is RVSCSHVPCSGAVDCYVSRPTEKS. A helical transmembrane segment spans residues 174 to 194; that stretch reads LLILFFWAVSALSFLLSLADL. The Cytoplasmic portion of the chain corresponds to 195 to 364; it reads LWILPRRKTL…HLRTKKSEWV (170 aa). The span at 331-340 shows a compositional bias: polar residues; sequence HLARHSSASK. The segment at 331–364 is disordered; the sequence is HLARHSSASKPQAPCRLTTSGSAPHLRTKKSEWV.

Belongs to the connexin family. Delta-type subfamily. A connexon is composed of a hexamer of connexins.

The protein localises to the cell membrane. The protein resides in the cell junction. It localises to the gap junction. Functionally, one gap junction consists of a cluster of closely packed pairs of transmembrane channels, the connexons, through which materials of low MW diffuse from one cell to a neighboring cell. This is Gap junction delta-4 protein (Gjd4) from Mus musculus (Mouse).